We begin with the raw amino-acid sequence, 59 residues long: Ribosome biogenesis protein Nop10 (59 aa).

Belongs to the NOP10 family.

Its function is as follows. Involved in ribosome biogenesis; more specifically in 18S rRNA pseudouridylation and in cleavage of pre-rRNA. In Thermococcus gammatolerans (strain DSM 15229 / JCM 11827 / EJ3), this protein is Ribosome biogenesis protein Nop10.